We begin with the raw amino-acid sequence, 503 residues long: Maturase K (503 aa).

The protein belongs to the intron maturase 2 family. MatK subfamily.

Its subcellular location is the plastid. It localises to the chloroplast. In terms of biological role, usually encoded in the trnK tRNA gene intron. Probably assists in splicing its own and other chloroplast group II introns. The protein is Maturase K of Eucalyptus globulus subsp. globulus (Tasmanian blue gum).